The primary structure comprises 117 residues: Ribosome-binding factor A (117 aa).

The protein belongs to the RbfA family. Monomer. Binds 30S ribosomal subunits, but not 50S ribosomal subunits or 70S ribosomes.

It is found in the cytoplasm. One of several proteins that assist in the late maturation steps of the functional core of the 30S ribosomal subunit. Associates with free 30S ribosomal subunits (but not with 30S subunits that are part of 70S ribosomes or polysomes). Required for efficient processing of 16S rRNA. May interact with the 5'-terminal helix region of 16S rRNA. The polypeptide is Ribosome-binding factor A (Leuconostoc mesenteroides subsp. mesenteroides (strain ATCC 8293 / DSM 20343 / BCRC 11652 / CCM 1803 / JCM 6124 / NCDO 523 / NBRC 100496 / NCIMB 8023 / NCTC 12954 / NRRL B-1118 / 37Y)).